The following is a 269-amino-acid chain: Elongation factor Ts (269 aa).

Residues 76–79 (TDFV) are involved in Mg(2+) ion dislocation from EF-Tu.

It belongs to the EF-Ts family.

It is found in the cytoplasm. Its function is as follows. Associates with the EF-Tu.GDP complex and induces the exchange of GDP to GTP. It remains bound to the aminoacyl-tRNA.EF-Tu.GTP complex up to the GTP hydrolysis stage on the ribosome. This Deinococcus geothermalis (strain DSM 11300 / CIP 105573 / AG-3a) protein is Elongation factor Ts.